Consider the following 255-residue polypeptide: Imidazole glycerol phosphate synthase subunit HisF (255 aa).

Catalysis depends on residues Asp12 and Asp131.

This sequence belongs to the HisA/HisF family. As to quaternary structure, heterodimer of HisH and HisF.

It localises to the cytoplasm. The enzyme catalyses 5-[(5-phospho-1-deoxy-D-ribulos-1-ylimino)methylamino]-1-(5-phospho-beta-D-ribosyl)imidazole-4-carboxamide + L-glutamine = D-erythro-1-(imidazol-4-yl)glycerol 3-phosphate + 5-amino-1-(5-phospho-beta-D-ribosyl)imidazole-4-carboxamide + L-glutamate + H(+). It participates in amino-acid biosynthesis; L-histidine biosynthesis; L-histidine from 5-phospho-alpha-D-ribose 1-diphosphate: step 5/9. Its function is as follows. IGPS catalyzes the conversion of PRFAR and glutamine to IGP, AICAR and glutamate. The HisF subunit catalyzes the cyclization activity that produces IGP and AICAR from PRFAR using the ammonia provided by the HisH subunit. This is Imidazole glycerol phosphate synthase subunit HisF from Ruthia magnifica subsp. Calyptogena magnifica.